The primary structure comprises 201 residues: Peptidyl-tRNA hydrolase (201 aa).

A tRNA-binding site is contributed by Y17. Residue H22 is the Proton acceptor of the active site. Residues F76, N78, and N124 each coordinate tRNA.

Belongs to the PTH family. As to quaternary structure, monomer.

It localises to the cytoplasm. It catalyses the reaction an N-acyl-L-alpha-aminoacyl-tRNA + H2O = an N-acyl-L-amino acid + a tRNA + H(+). Functionally, hydrolyzes ribosome-free peptidyl-tRNAs (with 1 or more amino acids incorporated), which drop off the ribosome during protein synthesis, or as a result of ribosome stalling. In terms of biological role, catalyzes the release of premature peptidyl moieties from peptidyl-tRNA molecules trapped in stalled 50S ribosomal subunits, and thus maintains levels of free tRNAs and 50S ribosomes. This is Peptidyl-tRNA hydrolase from Oleidesulfovibrio alaskensis (strain ATCC BAA-1058 / DSM 17464 / G20) (Desulfovibrio alaskensis).